A 678-amino-acid chain; its full sequence is Protein KHNYN (678 aa).

Serine 10 carries the phosphoserine modification. 2 disordered regions span residues 222 to 251 (QGVR…ARGD) and 347 to 407 (LHNG…ARGG). Positions 355 to 367 (PRVPSPPPAPEPP) are enriched in pro residues. Phosphoserine is present on serine 359. The segment covering 370–388 (CGDRGDCGDRGDVGDRGDK) has biased composition (basic and acidic residues). The RNase NYN domain occupies 437-589 (LRHIVIDGSN…LGRNGPTLDE (153 aa)). The interval 595–633 (ARTQGSSKAQHPSRGFAEHGKQQQGREEEKGSGGIRKTR) is disordered. Basic and acidic residues predominate over residues 610-633 (FAEHGKQQQGREEEKGSGGIRKTR).

The protein belongs to the N4BP1 family.

The polypeptide is Protein KHNYN (KHNYN) (Homo sapiens (Human)).